We begin with the raw amino-acid sequence, 237 residues long: UPF0174 protein YaaW (237 aa).

Belongs to the UPF0174 family.

This chain is UPF0174 protein YaaW, found in Escherichia coli O157:H7.